A 297-amino-acid polypeptide reads, in one-letter code: tRNA pseudouridine synthase B (297 aa).

D44 serves as the catalytic Nucleophile.

This sequence belongs to the pseudouridine synthase TruB family. Type 1 subfamily.

It carries out the reaction uridine(55) in tRNA = pseudouridine(55) in tRNA. Responsible for synthesis of pseudouridine from uracil-55 in the psi GC loop of transfer RNAs. The protein is tRNA pseudouridine synthase B of Corynebacterium efficiens (strain DSM 44549 / YS-314 / AJ 12310 / JCM 11189 / NBRC 100395).